The chain runs to 316 residues: Probable peptidyl-tRNA hydrolase 2 (316 aa).

Positions 1–127 (MSENIPDIDP…SHPVDPQEPN (127 aa)) are disordered. A compositionally biased stretch (polar residues) spans 44–53 (PTPSSVTVDN). Residues 75-89 (IPEVPIPSSAISISS) show a composition bias toward low complexity. The 42-residue stretch at 128 to 169 (EVNNEYLAHLLDLGFDEYTAVLALKRTNSAGVEQAVAWIVER) folds into the UBA domain. A disordered region spans residues 170–193 (SNESDFDEDSSSSENEADEEMGAV). Over residues 173–190 (SDFDEDSSSSENEADEEM) the composition is skewed to acidic residues.

The protein belongs to the PTH2 family.

It catalyses the reaction an N-acyl-L-alpha-aminoacyl-tRNA + H2O = an N-acyl-L-amino acid + a tRNA + H(+). In terms of biological role, the natural substrate for this enzyme may be peptidyl-tRNAs which drop off the ribosome during protein synthesis. The polypeptide is Probable peptidyl-tRNA hydrolase 2 (Caenorhabditis elegans).